A 279-amino-acid polypeptide reads, in one-letter code: Large ribosomal subunit protein uL2 (279 aa).

Disordered regions lie at residues 33-58 (LLAP…GGGH) and 223-279 (GVAM…RKRG). 2 stretches are compositionally biased toward basic residues: residues 40–58 (KGGR…GGGH) and 269–279 (VRRRYATRKRG).

It belongs to the universal ribosomal protein uL2 family. Part of the 50S ribosomal subunit. Forms a bridge to the 30S subunit in the 70S ribosome.

Functionally, one of the primary rRNA binding proteins. Required for association of the 30S and 50S subunits to form the 70S ribosome, for tRNA binding and peptide bond formation. It has been suggested to have peptidyltransferase activity; this is somewhat controversial. Makes several contacts with the 16S rRNA in the 70S ribosome. This is Large ribosomal subunit protein uL2 from Salinispora arenicola (strain CNS-205).